The chain runs to 85 residues: Sec-independent protein translocase protein TatA (85 aa).

Residues 1 to 21 traverse the membrane as a helical segment; it reads MAGLQGWQLVIIILLAILLFA. Residues 43–85 form a disordered region; sequence VKQMRTEGKDAKDERSGTGSTAADEPVEGRVVDRDETDPRDQR. 2 stretches are compositionally biased toward basic and acidic residues: residues 44–58 and 69–85; these read KQMRTEGKDAKDERS and VEGRVVDRDETDPRDQR.

It belongs to the TatA/E family. The Tat system comprises two distinct complexes: a TatABC complex, containing multiple copies of TatA, TatB and TatC subunits, and a separate TatA complex, containing only TatA subunits. Substrates initially bind to the TatABC complex, which probably triggers association of the separate TatA complex to form the active translocon.

The protein resides in the cell membrane. Functionally, part of the twin-arginine translocation (Tat) system that transports large folded proteins containing a characteristic twin-arginine motif in their signal peptide across membranes. TatA could form the protein-conducting channel of the Tat system. In Micrococcus luteus (strain ATCC 4698 / DSM 20030 / JCM 1464 / CCM 169 / CCUG 5858 / IAM 1056 / NBRC 3333 / NCIMB 9278 / NCTC 2665 / VKM Ac-2230) (Micrococcus lysodeikticus), this protein is Sec-independent protein translocase protein TatA.